Here is a 279-residue protein sequence, read N- to C-terminus: Protease HtpX homolog (279 aa).

A run of 2 helical transmembrane segments spans residues 6-26 (VFVL…ALGG) and 29-49 (GAIL…WGSS). Histidine 130 is a Zn(2+) binding site. Glutamate 131 is an active-site residue. Residue histidine 134 coordinates Zn(2+). The next 2 membrane-spanning stretches (helical) occupy residues 145-165 (IAAT…FFGG) and 176-196 (VAGI…QFAI). Glutamate 201 contributes to the Zn(2+) binding site.

The protein belongs to the peptidase M48B family. Requires Zn(2+) as cofactor.

It is found in the cell inner membrane. The protein is Protease HtpX homolog of Gemmatimonas aurantiaca (strain DSM 14586 / JCM 11422 / NBRC 100505 / T-27).